Here is a 467-residue protein sequence, read N- to C-terminus: Pup--protein ligase (467 aa).

Residue E12 participates in Mg(2+) binding. ATP is bound at residue R56. A Mg(2+)-binding site is contributed by Y58. D60 acts as the Proton acceptor in catalysis. E66 serves as a coordination point for Mg(2+). 2 residues coordinate ATP: T69 and W431.

Belongs to the Pup ligase/Pup deamidase family. Pup-conjugating enzyme subfamily.

The enzyme catalyses ATP + [prokaryotic ubiquitin-like protein]-L-glutamate + [protein]-L-lysine = ADP + phosphate + N(6)-([prokaryotic ubiquitin-like protein]-gamma-L-glutamyl)-[protein]-L-lysine.. The protein operates within protein degradation; proteasomal Pup-dependent pathway. Its pathway is protein modification; protein pupylation. Its function is as follows. Catalyzes the covalent attachment of the prokaryotic ubiquitin-like protein modifier Pup to the proteasomal substrate proteins, thereby targeting them for proteasomal degradation. This tagging system is termed pupylation. The ligation reaction involves the side-chain carboxylate of the C-terminal glutamate of Pup and the side-chain amino group of a substrate lysine. This Corynebacterium jeikeium (strain K411) protein is Pup--protein ligase.